The sequence spans 306 residues: tRNA pseudouridine synthase B (306 aa).

The active-site Nucleophile is the Asp48.

It belongs to the pseudouridine synthase TruB family. Type 1 subfamily.

It carries out the reaction uridine(55) in tRNA = pseudouridine(55) in tRNA. Responsible for synthesis of pseudouridine from uracil-55 in the psi GC loop of transfer RNAs. In Haemophilus influenzae (strain PittEE), this protein is tRNA pseudouridine synthase B.